A 740-amino-acid polypeptide reads, in one-letter code: Ribulose bisphosphate carboxylase, chloroplastic (740 aa).

Residues 1–55 (MPSSSFTTGLALGAGALVGANAFVAPTAKTTNLRAPTQEASLQVAASQQTEQPAP) constitute a chloroplast transit peptide. Residues 56 to 76 (STSALPWAFGAGACLALAAGG) traverse the membrane as a helical segment. Asn-213 is a substrate binding site. Lys-268 acts as the Proton acceptor in catalysis. Position 270 (Lys-270) interacts with substrate. Residues Lys-293, Asp-295, and Glu-296 each contribute to the Mg(2+) site. N6-carboxylysine is present on Lys-293. His-389 serves as the catalytic Proton acceptor. Residues Arg-390, His-423, and Ser-470 each contribute to the substrate site.

It belongs to the RuBisCO large chain family. Type II subfamily. In terms of assembly, homodimer. It depends on Mg(2+) as a cofactor.

It is found in the plastid. Its subcellular location is the chloroplast membrane. The catalysed reaction is 2 (2R)-3-phosphoglycerate + 2 H(+) = D-ribulose 1,5-bisphosphate + CO2 + H2O. It catalyses the reaction D-ribulose 1,5-bisphosphate + O2 = 2-phosphoglycolate + (2R)-3-phosphoglycerate + 2 H(+). RuBisCO catalyzes two reactions: the carboxylation of D-ribulose 1,5-bisphosphate, the primary event in carbon dioxide fixation, as well as the oxidative fragmentation of the pentose substrate. Both reactions occur simultaneously and in competition at the same active site. This chain is Ribulose bisphosphate carboxylase, chloroplastic (rbcL), found in Heterocapsa triquetra (Dinoflagellate).